Consider the following 297-residue polypeptide: MRPQLSDYQHLASGKVRELYRVDDEHLLLVASDRISAYDYVLDSMIPDKGRILTAMSVFFFGLVDAPNHLAGPPDDPRIPDEVLGRALVVCQLEMLPVECVARGYLTGSGLLDYQASGKVCGIALPPGLVEASKFAEPLFTPATKAELGDHDENISFAQVIETVGGVRANQLRDRTLQIYVKAADHALTRGIIIADTKFEFGADRDGNLLLADEIFTPDSSRYWPADEYRAGVVQNSFDKQFVRNWLTSAESGWDRGGDQPPPPLPDHIIAATRERYIEAYERISGLSFGEWIGPGA.

This sequence belongs to the SAICAR synthetase family.

It catalyses the reaction 5-amino-1-(5-phospho-D-ribosyl)imidazole-4-carboxylate + L-aspartate + ATP = (2S)-2-[5-amino-1-(5-phospho-beta-D-ribosyl)imidazole-4-carboxamido]succinate + ADP + phosphate + 2 H(+). It participates in purine metabolism; IMP biosynthesis via de novo pathway; 5-amino-1-(5-phospho-D-ribosyl)imidazole-4-carboxamide from 5-amino-1-(5-phospho-D-ribosyl)imidazole-4-carboxylate: step 1/2. In Mycobacterium marinum (strain ATCC BAA-535 / M), this protein is Phosphoribosylaminoimidazole-succinocarboxamide synthase.